The primary structure comprises 126 residues: Aspartate 1-decarboxylase (126 aa).

Ser-25 serves as the catalytic Schiff-base intermediate with substrate; via pyruvic acid. Ser-25 is subject to Pyruvic acid (Ser). Thr-57 contributes to the substrate binding site. The active-site Proton donor is the Tyr-58. 73–75 is a binding site for substrate; it reads GSA.

It belongs to the PanD family. As to quaternary structure, heterooctamer of four alpha and four beta subunits. Pyruvate is required as a cofactor. Post-translationally, is synthesized initially as an inactive proenzyme, which is activated by self-cleavage at a specific serine bond to produce a beta-subunit with a hydroxyl group at its C-terminus and an alpha-subunit with a pyruvoyl group at its N-terminus.

The protein localises to the cytoplasm. The enzyme catalyses L-aspartate + H(+) = beta-alanine + CO2. It functions in the pathway cofactor biosynthesis; (R)-pantothenate biosynthesis; beta-alanine from L-aspartate: step 1/1. In terms of biological role, catalyzes the pyruvoyl-dependent decarboxylation of aspartate to produce beta-alanine. The chain is Aspartate 1-decarboxylase from Chromobacterium violaceum (strain ATCC 12472 / DSM 30191 / JCM 1249 / CCUG 213 / NBRC 12614 / NCIMB 9131 / NCTC 9757 / MK).